The chain runs to 316 residues: FAD:protein FMN transferase (316 aa).

Residues Met-14, 88–90 (AFN), and Asp-146 each bind FAD. Ala-149 is a binding site for Mg(2+). Residues Lys-152 and Leu-231 each coordinate FAD. Asp-257 and Thr-261 together coordinate Mg(2+).

Belongs to the ApbE family. Mg(2+) serves as cofactor.

The protein localises to the cytoplasm. It catalyses the reaction L-threonyl-[protein] + FAD = FMN-L-threonyl-[protein] + AMP + H(+). Its function is as follows. Flavin transferase that catalyzes the transfer of the FMN moiety of FAD and its covalent binding to the hydroxyl group of a threonine residue in a target flavoprotein. Is responsible for the modification of the fumarate reductase KPK_2907. This is FAD:protein FMN transferase from Klebsiella pneumoniae (strain 342).